The following is a 495-amino-acid chain: Protein nucleotidyltransferase YdiU (495 aa).

ATP-binding residues include glycine 92, glycine 94, arginine 95, lysine 114, aspartate 126, glycine 127, arginine 177, and arginine 184. Aspartate 261 acts as the Proton acceptor in catalysis. Residues asparagine 262 and aspartate 271 each coordinate Mg(2+). Aspartate 271 is an ATP binding site.

Belongs to the SELO family. Mg(2+) is required as a cofactor. Mn(2+) serves as cofactor.

It carries out the reaction L-seryl-[protein] + ATP = 3-O-(5'-adenylyl)-L-seryl-[protein] + diphosphate. The catalysed reaction is L-threonyl-[protein] + ATP = 3-O-(5'-adenylyl)-L-threonyl-[protein] + diphosphate. It catalyses the reaction L-tyrosyl-[protein] + ATP = O-(5'-adenylyl)-L-tyrosyl-[protein] + diphosphate. The enzyme catalyses L-histidyl-[protein] + UTP = N(tele)-(5'-uridylyl)-L-histidyl-[protein] + diphosphate. It carries out the reaction L-seryl-[protein] + UTP = O-(5'-uridylyl)-L-seryl-[protein] + diphosphate. The catalysed reaction is L-tyrosyl-[protein] + UTP = O-(5'-uridylyl)-L-tyrosyl-[protein] + diphosphate. Its function is as follows. Nucleotidyltransferase involved in the post-translational modification of proteins. It can catalyze the addition of adenosine monophosphate (AMP) or uridine monophosphate (UMP) to a protein, resulting in modifications known as AMPylation and UMPylation. The chain is Protein nucleotidyltransferase YdiU from Bordetella bronchiseptica (strain ATCC BAA-588 / NCTC 13252 / RB50) (Alcaligenes bronchisepticus).